The following is a 675-amino-acid chain: DNA ligase (675 aa).

NAD(+) is bound by residues 33-37 (DAEYD), 82-83 (SL), and Glu-114. Lys-116 functions as the N6-AMP-lysine intermediate in the catalytic mechanism. NAD(+) is bound by residues Arg-137, Glu-174, Lys-291, and Lys-315. Zn(2+) is bound by residues Cys-409, Cys-412, Cys-427, and Cys-433. The BRCT domain maps to 595–675 (AGDNPFAGKT…EMIRLLDQSK (81 aa)).

This sequence belongs to the NAD-dependent DNA ligase family. LigA subfamily. Mg(2+) is required as a cofactor. Requires Mn(2+) as cofactor.

The enzyme catalyses NAD(+) + (deoxyribonucleotide)n-3'-hydroxyl + 5'-phospho-(deoxyribonucleotide)m = (deoxyribonucleotide)n+m + AMP + beta-nicotinamide D-nucleotide.. Functionally, DNA ligase that catalyzes the formation of phosphodiester linkages between 5'-phosphoryl and 3'-hydroxyl groups in double-stranded DNA using NAD as a coenzyme and as the energy source for the reaction. It is essential for DNA replication and repair of damaged DNA. The polypeptide is DNA ligase (Proteus mirabilis (strain HI4320)).